The primary structure comprises 404 residues: Argininosuccinate synthase (404 aa).

ATP is bound by residues 12-20 and alanine 40; that span reads AYSGGLDTS. Residues tyrosine 92 and serine 97 each contribute to the L-citrulline site. Glycine 122 contacts ATP. L-aspartate-binding residues include threonine 124, asparagine 128, and aspartate 129. Residue asparagine 128 coordinates L-citrulline. The L-citrulline site is built by arginine 132, serine 181, serine 190, glutamate 266, and tyrosine 278.

The protein belongs to the argininosuccinate synthase family. Type 1 subfamily. As to quaternary structure, homotetramer.

The protein localises to the cytoplasm. The enzyme catalyses L-citrulline + L-aspartate + ATP = 2-(N(omega)-L-arginino)succinate + AMP + diphosphate + H(+). It functions in the pathway amino-acid biosynthesis; L-arginine biosynthesis; L-arginine from L-ornithine and carbamoyl phosphate: step 2/3. This is Argininosuccinate synthase from Erwinia tasmaniensis (strain DSM 17950 / CFBP 7177 / CIP 109463 / NCPPB 4357 / Et1/99).